A 1807-amino-acid chain; its full sequence is Atrochrysone carboxylic acid synthase Agnpks1 (1807 aa).

The interval 41 to 173 is N-terminal acylcarrier protein transacylase domain (SAT); it reads LFRELHNHSK…ITGAQVIRQA (133 aa). In terms of domain architecture, Ketosynthase family 3 (KS3) spans 411–845; it reads QSKIAIVGMS…GGNTTILLEE (435 aa). Active-site for beta-ketoacyl synthase activity residues include cysteine 584, histidine 720, and histidine 763. The interval 946–1265 is malonyl-CoA:ACP transacylase (MAT) domain; it reads FTFTGQGASY…SLAALHCAGV (320 aa). Positions 1334–1653 are product template (PT) domain; sequence TSTVHQIIQE…RILLSRFFSA (320 aa). Residues 1338 to 1473 are N-terminal hotdog fold; sequence HQIIQESIDG…ATLIYGDPSE (136 aa). One can recognise a PKS/mFAS DH domain in the interval 1338 to 1648; that stretch reads HQIIQESIDG…FRRYPRILLS (311 aa). Residue histidine 1370 is the Proton acceptor; for dehydratase activity of the active site. Residues 1500–1648 form a C-terminal hotdog fold region; it reads VANRFNHQMA…FRRYPRILLS (149 aa). The active-site Proton donor; for dehydratase activity is aspartate 1559. The Carrier domain occupies 1732–1806; sequence DTTTAKAIQI…DLRSWLEEYY (75 aa). Serine 1766 carries the post-translational modification O-(pantetheine 4'-phosphoryl)serine.

It carries out the reaction holo-[ACP] + 8 malonyl-CoA + 8 H(+) = atrochrysone carboxyl-[ACP] + 8 CO2 + 8 CoA + 2 H2O. The protein operates within secondary metabolite biosynthesis. Its function is as follows. Non-reducing polyketide synthase; part of the gene cluster that mediates the biosynthesis of agnestins, dihydroxy-xanthone metabolites. The pathway begins with the assembly and cyclization of atrochrysone thioester by the non-reducing polyketide synthase Agnpks1. The atrochrysone carboxyl ACP thioesterase AgnL7 then breaks the thioester bond and releases the atrochrysone carboxylic acid as the first enzyme-free intermediate. The decarboxylase AgnL1 then catalyzes the concerted decarboxylation-elimination required to convert atochrysone carboxylic acid into emodin anthrone, which is further oxidized to emodin by the anthrone oxygenase AgnL2. Emodin then undergoes reduction catalyzed by the oxidoreductase AgnL4 to yield the dihydroquinone tautomer which is the substrate for reduction by the short chain dehydrogenase AgnL6 reduction to produce hydroxyketone, followed by AgnL8 dehydration and likely spontaneous autoxidation to chrysophanol. Baeyer-Villiger oxidation by the oxidase AgnL3 leads to monodictyphenone via cleavage of the C-10/C-10a bond of chrysophanol. Alternative cleavage at the C-4a/C-10 bond of chrysophanol also leads to the formation some cephalone F. Further conversion to agnestins A and B, requires reduction to dihydro-monodictyphenone, oxidation to agnestin C probably via an epoxide, and rearrangement to either agnestin A or agnestin B directly, although agnestin A or agnestin B can also interconvert. Within the cluster, AgnR1 is the only unassigned oxidoreductase present which could be involved in this conversion. However, AgnR1 seems not to be involved in this step, and thus genes involved in the proposed oxidation/reduction may be located elsewhere on the genome. Further agnestin A derivatives are probably formed by spontaneous decarboxylations, dehydrations and methanolysis reactions. The polypeptide is Atrochrysone carboxylic acid synthase Agnpks1 (Paecilomyces divaricatus (Penicillium divaricatum)).